The chain runs to 788 residues: Endonuclease MutS2 (788 aa).

332-339 lines the ATP pocket; that stretch reads GPNTGGKT. The region spanning 713-788 is the Smr domain; sequence IDLRGLDSEE…GTGVTVVELK (76 aa).

This sequence belongs to the DNA mismatch repair MutS family. MutS2 subfamily. As to quaternary structure, homodimer. Binds to stalled ribosomes, contacting rRNA.

Functionally, endonuclease that is involved in the suppression of homologous recombination and thus may have a key role in the control of bacterial genetic diversity. In terms of biological role, acts as a ribosome collision sensor, splitting the ribosome into its 2 subunits. Detects stalled/collided 70S ribosomes which it binds and splits by an ATP-hydrolysis driven conformational change. Acts upstream of the ribosome quality control system (RQC), a ribosome-associated complex that mediates the extraction of incompletely synthesized nascent chains from stalled ribosomes and their subsequent degradation. Probably generates substrates for RQC. The polypeptide is Endonuclease MutS2 (Clostridium acetobutylicum (strain ATCC 824 / DSM 792 / JCM 1419 / IAM 19013 / LMG 5710 / NBRC 13948 / NRRL B-527 / VKM B-1787 / 2291 / W)).